The primary structure comprises 457 residues: Siroheme synthase (457 aa).

The precorrin-2 dehydrogenase /sirohydrochlorin ferrochelatase stretch occupies residues 1-204 (MDHLPIFCQL…ADEKAVNATT (204 aa)). NAD(+) contacts are provided by residues 22 to 23 (DV) and 43 to 44 (LT). Ser-128 bears the Phosphoserine mark. Positions 216–457 (GEVVLVGAGP…RDKLNWFSNY (242 aa)) are uroporphyrinogen-III C-methyltransferase. Pro-225 provides a ligand contact to S-adenosyl-L-methionine. The active-site Proton acceptor is Asp-248. The Proton donor role is filled by Lys-270. S-adenosyl-L-methionine is bound by residues 301-303 (GGD), Ile-306, 331-332 (TA), Met-382, and Gly-411.

The protein in the N-terminal section; belongs to the precorrin-2 dehydrogenase / sirohydrochlorin ferrochelatase family. It in the C-terminal section; belongs to the precorrin methyltransferase family.

The catalysed reaction is uroporphyrinogen III + 2 S-adenosyl-L-methionine = precorrin-2 + 2 S-adenosyl-L-homocysteine + H(+). It catalyses the reaction precorrin-2 + NAD(+) = sirohydrochlorin + NADH + 2 H(+). It carries out the reaction siroheme + 2 H(+) = sirohydrochlorin + Fe(2+). Its pathway is cofactor biosynthesis; adenosylcobalamin biosynthesis; precorrin-2 from uroporphyrinogen III: step 1/1. It functions in the pathway cofactor biosynthesis; adenosylcobalamin biosynthesis; sirohydrochlorin from precorrin-2: step 1/1. The protein operates within porphyrin-containing compound metabolism; siroheme biosynthesis; precorrin-2 from uroporphyrinogen III: step 1/1. It participates in porphyrin-containing compound metabolism; siroheme biosynthesis; siroheme from sirohydrochlorin: step 1/1. Its pathway is porphyrin-containing compound metabolism; siroheme biosynthesis; sirohydrochlorin from precorrin-2: step 1/1. Its function is as follows. Multifunctional enzyme that catalyzes the SAM-dependent methylations of uroporphyrinogen III at position C-2 and C-7 to form precorrin-2 via precorrin-1. Then it catalyzes the NAD-dependent ring dehydrogenation of precorrin-2 to yield sirohydrochlorin. Finally, it catalyzes the ferrochelation of sirohydrochlorin to yield siroheme. The sequence is that of Siroheme synthase from Salmonella choleraesuis (strain SC-B67).